The chain runs to 116 residues: UPF0102 protein PERMA_0362 (116 aa).

Belongs to the UPF0102 family.

The chain is UPF0102 protein PERMA_0362 from Persephonella marina (strain DSM 14350 / EX-H1).